The primary structure comprises 388 residues: Ferrochelatase (388 aa).

Residues His-196 and Glu-277 each contribute to the Fe cation site.

The protein belongs to the ferrochelatase family.

The protein resides in the cytoplasm. It catalyses the reaction heme b + 2 H(+) = protoporphyrin IX + Fe(2+). Its pathway is porphyrin-containing compound metabolism; protoheme biosynthesis; protoheme from protoporphyrin-IX: step 1/1. Catalyzes the ferrous insertion into protoporphyrin IX. The chain is Ferrochelatase from Nostoc punctiforme (strain ATCC 29133 / PCC 73102).